The primary structure comprises 584 residues: Proteasome-associated ATPase (584 aa).

A coiled-coil region spans residues 16 to 91; that stretch reads EELASQVRLL…KEEVDRLAQP (76 aa). Residue 273 to 278 coordinates ATP; the sequence is GCGKTL. The segment at 583–584 is docks into pockets in the proteasome alpha-ring; sequence YL.

Belongs to the AAA ATPase family. As to quaternary structure, homohexamer. Assembles into a hexameric ring structure that caps the 20S proteasome core. Strongly interacts with the prokaryotic ubiquitin-like protein Pup through a hydrophobic interface; the interacting region of ARC lies in its N-terminal coiled-coil domain. There is one Pup binding site per ARC hexamer ring. Upon ATP-binding, the C-terminus of ARC interacts with the alpha-rings of the proteasome core, possibly by binding to the intersubunit pockets.

It functions in the pathway protein degradation; proteasomal Pup-dependent pathway. ATPase which is responsible for recognizing, binding, unfolding and translocation of pupylated proteins into the bacterial 20S proteasome core particle. May be essential for opening the gate of the 20S proteasome via an interaction with its C-terminus, thereby allowing substrate entry and access to the site of proteolysis. Thus, the C-termini of the proteasomal ATPase may function like a 'key in a lock' to induce gate opening and therefore regulate proteolysis. The polypeptide is Proteasome-associated ATPase (Nocardioides sp. (strain ATCC BAA-499 / JS614)).